We begin with the raw amino-acid sequence, 263 residues long: Hydroxyacylglutathione hydrolase (263 aa).

H56, H58, D60, H61, H115, D135, and H175 together coordinate Zn(2+).

It belongs to the metallo-beta-lactamase superfamily. Glyoxalase II family. Monomer. It depends on Zn(2+) as a cofactor.

It carries out the reaction an S-(2-hydroxyacyl)glutathione + H2O = a 2-hydroxy carboxylate + glutathione + H(+). It functions in the pathway secondary metabolite metabolism; methylglyoxal degradation; (R)-lactate from methylglyoxal: step 2/2. Its function is as follows. Thiolesterase that catalyzes the hydrolysis of S-D-lactoyl-glutathione to form glutathione and D-lactic acid. This is Hydroxyacylglutathione hydrolase from Polaromonas sp. (strain JS666 / ATCC BAA-500).